The primary structure comprises 816 residues: Transducer protein Htr18 (816 aa).

The next 2 helical transmembrane spans lie at 21–41 and 282–302; these read VVIV…TQAV and NIVV…LVIG. The region spanning 303-356 is the HAMP 1 domain; sequence RDALTALTDMSDRAEAIAAGDIDTAIEETTRIDEVGDLRRSFRDIQEYLQTVAG. Residues 399–425 form a disordered region; that stretch reads DAQETAEQSRKEAEQSREEAEALAAAL. The span at 405–418 shows a compositional bias: basic and acidic residues; it reads EQSRKEAEQSREEA. One can recognise an HAMP 2 domain in the interval 423-476; the sequence is AALESQAQDIRETVEHAADGDLTQRLETDTDHESMAAIATALNSLLEELEGTIH. The Methyl-accepting transducer domain maps to 495 to 731; sequence SAEEVKRASG…EVVTMVDEVG (237 aa). A disordered region spans residues 790 to 816; that stretch reads GGAENTTGAFVRSASTDHSRDATHHDT. Positions 793–803 are enriched in polar residues; that stretch reads ENTTGAFVRSA. The span at 804–816 shows a compositional bias: basic and acidic residues; it reads STDHSRDATHHDT.

It belongs to the methyl-accepting chemotaxis (MCP) protein family. Methylated by CheR.

It is found in the cell membrane. Potentially involved in chemo- or phototactic signal transduction. In Halobacterium salinarum (strain ATCC 29341 / DSM 671 / R1), this protein is Transducer protein Htr18 (htr18).